Reading from the N-terminus, the 334-residue chain is ADP-L-glycero-D-manno-heptose-6-epimerase (334 aa).

Residues 11 to 12 (FI), 32 to 33 (DN), lysine 39, lysine 54, 77 to 81 (QGACS), and asparagine 94 contribute to the NADP(+) site. Catalysis depends on tyrosine 141, which acts as the Proton acceptor. Lysine 145 serves as a coordination point for NADP(+). Residue asparagine 171 coordinates substrate. The NADP(+) site is built by valine 172 and lysine 180. Catalysis depends on lysine 180, which acts as the Proton acceptor. Substrate-binding positions include arginine 182, histidine 189, 203–206 (FGSN), arginine 216, and tyrosine 295.

It belongs to the NAD(P)-dependent epimerase/dehydratase family. HldD subfamily. As to quaternary structure, homopentamer. Requires NADP(+) as cofactor.

It catalyses the reaction ADP-D-glycero-beta-D-manno-heptose = ADP-L-glycero-beta-D-manno-heptose. It participates in nucleotide-sugar biosynthesis; ADP-L-glycero-beta-D-manno-heptose biosynthesis; ADP-L-glycero-beta-D-manno-heptose from D-glycero-beta-D-manno-heptose 7-phosphate: step 4/4. Functionally, catalyzes the interconversion between ADP-D-glycero-beta-D-manno-heptose and ADP-L-glycero-beta-D-manno-heptose via an epimerization at carbon 6 of the heptose. This Neisseria meningitidis serogroup C / serotype 2a (strain ATCC 700532 / DSM 15464 / FAM18) protein is ADP-L-glycero-D-manno-heptose-6-epimerase.